A 91-amino-acid chain; its full sequence is Small ribosomal subunit protein uS19 (91 aa).

The protein belongs to the universal ribosomal protein uS19 family.

Protein S19 forms a complex with S13 that binds strongly to the 16S ribosomal RNA. This chain is Small ribosomal subunit protein uS19, found in Pseudomonas fluorescens (strain SBW25).